We begin with the raw amino-acid sequence, 263 residues long: MESITISQLKNWKINKKKFAAITAYDFSFSRLFSNCGIPVILIGDSLGMTIQGHTSTLPVKIEDIAYHTKAVRKGAPNTFLISDLPFMSYYDTKQALKNTAKIIRSGANMIKMEGGKWLIEIIRELSNRLILICGHIGLIPQSFHYLGGYKVQGRKENDANKLIDEALLLEESGINMLILECIPEKLAKKITESLSIPVIGIGSGKNTDGQILVMHDLLGITEGKTPSFTKNFLSESDSIQKAIQKYIYEVEHSIYPSKKHSF.

Mg(2+)-binding residues include D45 and D84. 3-methyl-2-oxobutanoate-binding positions include 45 to 46 (DS), D84, and K112. E114 is a binding site for Mg(2+). Catalysis depends on E181, which acts as the Proton acceptor.

This sequence belongs to the PanB family. Homodecamer; pentamer of dimers. Mg(2+) is required as a cofactor.

The protein resides in the cytoplasm. The catalysed reaction is 3-methyl-2-oxobutanoate + (6R)-5,10-methylene-5,6,7,8-tetrahydrofolate + H2O = 2-dehydropantoate + (6S)-5,6,7,8-tetrahydrofolate. It functions in the pathway cofactor biosynthesis; (R)-pantothenate biosynthesis; (R)-pantoate from 3-methyl-2-oxobutanoate: step 1/2. Functionally, catalyzes the reversible reaction in which hydroxymethyl group from 5,10-methylenetetrahydrofolate is transferred onto alpha-ketoisovalerate to form ketopantoate. This is 3-methyl-2-oxobutanoate hydroxymethyltransferase from Buchnera aphidicola subsp. Acyrthosiphon pisum (strain APS) (Acyrthosiphon pisum symbiotic bacterium).